Reading from the N-terminus, the 205-residue chain is Dephospho-CoA kinase (205 aa).

Positions 15 to 205 (VIGLTGGIAT…VERALDQASI (191 aa)) constitute a DPCK domain. 23–28 (ATGKST) is a binding site for ATP.

It belongs to the CoaE family.

The protein localises to the cytoplasm. The enzyme catalyses 3'-dephospho-CoA + ATP = ADP + CoA + H(+). It participates in cofactor biosynthesis; coenzyme A biosynthesis; CoA from (R)-pantothenate: step 5/5. Functionally, catalyzes the phosphorylation of the 3'-hydroxyl group of dephosphocoenzyme A to form coenzyme A. This Gloeobacter violaceus (strain ATCC 29082 / PCC 7421) protein is Dephospho-CoA kinase.